A 444-amino-acid polypeptide reads, in one-letter code: Deoxyguanosinetriphosphate triphosphohydrolase-like protein (444 aa).

Residues 1-26 (MTESLWHERRLTEEKKRRNDHRSPYQ) form a disordered region. An HD domain is found at 59–250 (RLTHSLEVSQ…MELADDIAYA (192 aa)).

The protein belongs to the dGTPase family. Type 2 subfamily.

This is Deoxyguanosinetriphosphate triphosphohydrolase-like protein from Shewanella sediminis (strain HAW-EB3).